The following is a 475-amino-acid chain: METVLKNDCSHCQESVILRENGGAGRSSNTGIQHDIICVGFGPAALAIAIAMRDRGIQRRVRFLERQPEFGWHTGMLLPGSKMQISFIKDLATIRNPRSHFTFLNYLHQKDRLVHFTNLSTHLPFREEFNDYMKWCASHFNDWVQYNQEVLSVTAVESTPGRPAEYFKLISRDVRSGELRELSANHIIVASGGEPAIPPILSTQHLPKTVIHSSTYLGSVHHLLQEKNGSYRFAVVGGGQSAVEISEDIQSRYANSKVTLVTKASALKPSDDSPFVNEIFDPSSVDKFYSLDHSARQQTLLENKATNYGVVRLPLLESVYEKLYRQKFLEPNPAKWPFRLVTGREVMGLKELPNNQIELQLKDTLSGRVESSAEVYDLVILATGYTRNPIATMLKPLEQIVEAPADGKTYCTDRDYRLRFRQGKVKRDAGIWLQGCCESSHGLSDSLLSILAVRSSELLDSILASSKRAEDHARL.

FAD is bound by residues 65–73 (ERQPEFGWH) and Gln-84. Substrate is bound at residue Lys-89. Val-150 is a binding site for FAD. 238-241 (GGQS) contributes to the NADP(+) binding site. Residues 277 to 280 (NEIF) and Asn-307 contribute to the substrate site. NADP(+) is bound at residue 307-309 (NYG). 446-448 (SLL) is an FAD binding site. Ser-449 lines the substrate pocket.

It belongs to the lysine N(6)-hydroxylase/L-ornithine N(5)-oxygenase family. In terms of assembly, homotetramer. Requires FAD as cofactor.

The enzyme catalyses L-ornithine + NADPH + O2 = N(5)-hydroxy-L-ornithine + NADP(+) + H2O. The catalysed reaction is L-ornithine + NADH + O2 = N(5)-hydroxy-L-ornithine + NAD(+) + H2O. It functions in the pathway siderophore biosynthesis. In terms of biological role, L-ornithine N(5)-monooxygenase; part of the gene cluster that mediates the biosynthesis of hydroxamate-containing siderophores that play a critical role in virulence via intracellular iron acquisition during macrophage infection. SID1 catalyzes the conversion of L-ornithine to N(5)-hydroxyornithine, the first step in the biosynthesis of all hydroxamate-containing siderophores. The chain is L-ornithine N(5)-monooxygenase from Ajellomyces capsulatus (Darling's disease fungus).